Here is a 131-residue protein sequence, read N- to C-terminus: Ribonuclease VapC42 (131 aa).

The region spanning 1-125 is the PINc domain; it reads MIVDTSAIVA…FRGDDFTHTD (125 aa). Residues Asp-4 and Asp-100 each coordinate Mg(2+).

The protein belongs to the PINc/VapC protein family. Requires Mg(2+) as cofactor.

Functionally, toxic component of a type II toxin-antitoxin (TA) system. An RNase. Its cognate antitoxin is VapB42. This chain is Ribonuclease VapC42, found in Mycobacterium tuberculosis (strain CDC 1551 / Oshkosh).